A 440-amino-acid chain; its full sequence is Protein disulfide-isomerase A6 (440 aa).

The first 19 residues, 1–19 (MARLVLGLVSCTFFLAVSG), serve as a signal peptide directing secretion. 2 consecutive Thioredoxin domains span residues 20 to 133 (LYSS…ALRQ) and 151 to 287 (QGRG…EDIA). Cys55 and Cys58 form a disulfide bridge. 3 positions are modified to phosphoserine: Ser129, Ser156, and Ser158. The tract at residues 139–161 (LGGRSGGYSSGKQGRGDSSSKKD) is disordered. Residues 152–161 (GRGDSSSKKD) are compositionally biased toward basic and acidic residues. Cys190 and Cys193 are oxidised to a cystine. The segment at 399–440 (GGGSFPTITPREPWDGKDGELPVEDDIDLSDVELDDLEKDEL) is disordered. The span at 419–440 (LPVEDDIDLSDVELDDLEKDEL) shows a compositional bias: acidic residues. Ser428 carries the post-translational modification Phosphoserine. Positions 437-440 (KDEL) match the Prevents secretion from ER motif.

The protein belongs to the protein disulfide isomerase family. Part of a large chaperone multiprotein complex comprising DNAJB11, HSP90B1, HSPA5, HYOU, PDIA2, PDIA4, PDIA6, PPIB, SDF2L1, UGGT1 and very small amounts of ERP29, but not, or at very low levels, CALR nor CANX. Interacts with MICA on the surface of tumor cells, leading to MICA disulfide bond reduction which is required for its release from tumor cells. Interacts with ITGB3 following platelet stimulation. Interacts with ERN1; the interaction is direct. Interacts with EIF2AK3.

The protein localises to the endoplasmic reticulum lumen. It is found in the cell membrane. It localises to the melanosome. The catalysed reaction is Catalyzes the rearrangement of -S-S- bonds in proteins.. Functionally, may function as a chaperone that inhibits aggregation of misfolded proteins. Negatively regulates the unfolded protein response (UPR) through binding to UPR sensors such as ERN1, which in turn inactivates ERN1 signaling. May also regulate the UPR via the EIF2AK3 UPR sensor. Plays a role in platelet aggregation and activation by agonists such as convulxin, collagen and thrombin. The protein is Protein disulfide-isomerase A6 (Pdia6) of Mus musculus (Mouse).